Consider the following 224-residue polypeptide: UPF0758 protein VCM66_0205 (224 aa).

Residues 1–20 form a disordered region; sequence MSLKQLPTESMPREKLLQRG. Residues 102–224 form the MPN domain; that stretch reads ALTSPQQTKL…VVSFAERGWI (123 aa). Zn(2+) contacts are provided by H173, H175, and D186. Positions 173–186 match the JAMM motif motif; that stretch reads HNHPSGVAEPSQAD.

This sequence belongs to the UPF0758 family.

This is UPF0758 protein VCM66_0205 from Vibrio cholerae serotype O1 (strain M66-2).